Consider the following 193-residue polypeptide: Acyl carrier protein phosphodiesterase (193 aa).

The protein belongs to the AcpH family.

It carries out the reaction holo-[ACP] + H2O = apo-[ACP] + (R)-4'-phosphopantetheine + H(+). Its function is as follows. Converts holo-ACP to apo-ACP by hydrolytic cleavage of the phosphopantetheine prosthetic group from ACP. The protein is Acyl carrier protein phosphodiesterase of Klebsiella pneumoniae (strain 342).